Reading from the N-terminus, the 119-residue chain is MVFGTGVDNVELSRIQKALTRSERFVEQVLTAVELEKYNSFQSTARKTEFLAGRWAAKEAFSKAYGTGFGKALGMHDLEIKNDELGKPFFTKHPFDGQVHLSISHSNLEAVAFVVLEKN.

Mg(2+)-binding residues include D8 and E59.

It belongs to the P-Pant transferase superfamily. AcpS family. It depends on Mg(2+) as a cofactor.

The protein localises to the cytoplasm. It catalyses the reaction apo-[ACP] + CoA = holo-[ACP] + adenosine 3',5'-bisphosphate + H(+). Its function is as follows. Transfers the 4'-phosphopantetheine moiety from coenzyme A to a Ser of acyl-carrier-protein. The polypeptide is Holo-[acyl-carrier-protein] synthase (Lactococcus lactis subsp. lactis (strain IL1403) (Streptococcus lactis)).